We begin with the raw amino-acid sequence, 226 residues long: 7-cyano-7-deazaguanine synthase (226 aa).

7–17 (ISGGMDSLVVA) lines the ATP pocket. Cys187, Cys195, Cys198, and Cys201 together coordinate Zn(2+).

Belongs to the QueC family. Zn(2+) is required as a cofactor.

It catalyses the reaction 7-carboxy-7-deazaguanine + NH4(+) + ATP = 7-cyano-7-deazaguanine + ADP + phosphate + H2O + H(+). The protein operates within purine metabolism; 7-cyano-7-deazaguanine biosynthesis. Functionally, catalyzes the ATP-dependent conversion of 7-carboxy-7-deazaguanine (CDG) to 7-cyano-7-deazaguanine (preQ(0)). The sequence is that of 7-cyano-7-deazaguanine synthase from Chlorobium phaeobacteroides (strain BS1).